Consider the following 469-residue polypeptide: Histone chaperone rtt-106 (469 aa).

Disordered regions lie at residues 54–73 (EEPA…PNGA) and 364–469 (MAEQ…EGEE). Basic and acidic residues-rich tracts occupy residues 364–379 (MAEQ…ENAK) and 402–415 (ELER…QRLQ). Acidic residues-rich tracts occupy residues 416 to 433 (DEED…EGES) and 440 to 469 (SEEE…EGEE).

This sequence belongs to the RTT106 family. In terms of assembly, interacts with histones H3 and H4.

It localises to the nucleus. The protein localises to the chromosome. In terms of biological role, histones H3 and H4 chaperone involved in the nucleosome formation and heterochromatin silencing. Required for the deposition of H3K56ac-carrying H3-H4 complex onto newly-replicated DNA. Plays a role in the transcriptional regulation of the cell-cycle dependent histone genes by creating a repressive structure at the core histone gene promoter. This is Histone chaperone rtt-106 (rtt-106) from Neurospora crassa (strain ATCC 24698 / 74-OR23-1A / CBS 708.71 / DSM 1257 / FGSC 987).